Reading from the N-terminus, the 394-residue chain is Phosphoglycerate kinase (394 aa).

Residues 21–23, R36, 59–62, R118, and R151 each bind substrate; these read DFN and HLGR. S183 carries the phosphoserine modification. K201 serves as a coordination point for ATP. T299 is modified (phosphothreonine). Residues E323 and 350-353 contribute to the ATP site; that span reads GGDS.

This sequence belongs to the phosphoglycerate kinase family. As to quaternary structure, monomer.

Its subcellular location is the cytoplasm. The enzyme catalyses (2R)-3-phosphoglycerate + ATP = (2R)-3-phospho-glyceroyl phosphate + ADP. It participates in carbohydrate degradation; glycolysis; pyruvate from D-glyceraldehyde 3-phosphate: step 2/5. The chain is Phosphoglycerate kinase from Shouchella clausii (strain KSM-K16) (Alkalihalobacillus clausii).